Here is a 340-residue protein sequence, read N- to C-terminus: DNA-directed RNA polymerase subunit alpha (340 aa).

An alpha N-terminal domain (alpha-NTD) region spans residues Met-1–Asp-235. An alpha C-terminal domain (alpha-CTD) region spans residues Trp-251–Phe-340.

It belongs to the RNA polymerase alpha chain family. Homodimer. The RNAP catalytic core consists of 2 alpha, 1 beta, 1 beta' and 1 omega subunit. When a sigma factor is associated with the core the holoenzyme is formed, which can initiate transcription.

The catalysed reaction is RNA(n) + a ribonucleoside 5'-triphosphate = RNA(n+1) + diphosphate. Its function is as follows. DNA-dependent RNA polymerase catalyzes the transcription of DNA into RNA using the four ribonucleoside triphosphates as substrates. This chain is DNA-directed RNA polymerase subunit alpha, found in Magnetococcus marinus (strain ATCC BAA-1437 / JCM 17883 / MC-1).